Reading from the N-terminus, the 3907-residue chain is Cyclo-acetoacetyl-L-tryptophan synthase (3907 aa).

Residues lysine 2–serine 436 enclose the Ketosynthase family 3 (KS3) domain. Active-site for beta-ketoacyl synthase activity residues include cysteine 176, histidine 313, and histidine 356. The interval isoleucine 555–leucine 870 is malonyl-CoA:ACP transacylase (MAT) domain. The tract at residues histidine 937–alanine 1074 is N-terminal hotdog fold. Residues histidine 937 to proline 1236 form a dehydratase (DH) domain region. The 303-residue stretch at histidine 937–serine 1239 folds into the PKS/mFAS DH domain. A C-terminal hotdog fold region spans residues leucine 1092–serine 1239. Residues alanine 1386 to aspartate 1573 form a methyltransferase (MT) domain region. A ketoreductase (KR)domain region spans residues glycine 2064–valine 2238. The tract at residues threonine 2324 to arginine 2352 is disordered. The region spanning aspartate 2356–asparagine 2430 is the Carrier 1 domain. Serine 2390 carries the O-(pantetheine 4'-phosphoryl)serine modification. Residues methionine 2504–serine 2926 form a condensation region. Residues phenylalanine 2959–aspartate 3359 are adenylation. Positions lysine 3474–lysine 3549 constitute a Carrier 2 domain. O-(pantetheine 4'-phosphoryl)serine is present on serine 3509. The tract at residues leucine 3594–glutamate 3813 is reductase (RED) domain.

In the C-terminal section; belongs to the NRP synthetase family.

It catalyses the reaction L-tryptophan + malonyl-CoA + acetyl-CoA = cyclo-acetoacetyl-L-tryptophan + CO2 + 2 CoA + H2O. Its pathway is secondary metabolite biosynthesis. Functionally, hybrid PKS-NRPS synthetase; part of the gene cluster that mediates the biosynthesis of the fungal neurotoxin cyclopiazonic acid (CPA), a nanomolar inhibitor of Ca(2+)-ATPase with a unique pentacyclic indole tetramic acid scaffold. The hybrid two module polyketide synthase-nonribosomal peptide synthetase (PKS-NRPS) cpaS incorporates acetyl-CoA, malonyl-CoA, and tryptophan (Trp) and utilizes a C-terminal redox-incompetent reductase domain to make and release the tryptophan tetramic acid, cyclo-acetoacetyl-L-tryptophan (c-AATrp), as the first intermediate in the pathway. CpaS catalyzes a Dieckmann-type cyclization on the N-acetoacetyl-Trp intermediate bound in thioester linkage to the phosphopantetheinyl arm of the T domain to form and release c-AATrp. CpaD then regiospecifically dimethylallylates c-AATrp to form beta-cyclopiazonic acid. CpaD discriminates against free Trp but accepts tryptophan-containing thiohydantoins, diketopiperazines, and linear peptides as substrates for C4-prenylation and also acts as regiospecific O-dimethylallyltransferase (DMAT) on a tyrosine-derived tetramic acid. The beta-cyclopiazonate dehydrogenase cpaO then carries out the dehydrogenation of beta-CPA to yield an unstable enimine product, which is captured by intramolecular cyclization to create the pentacyclic fused scaffold of alpha-cyclopiazonate. Finally, the cytochrome P450 monooxygenase cpaH mediates the conversion of CPA into the less toxic 2-oxocyclopiazonic acid, the end product of the CPA pathway in A.oryza. This Aspergillus oryzae (Yellow koji mold) protein is Cyclo-acetoacetyl-L-tryptophan synthase.